The following is a 417-amino-acid chain: FAD-dependent monooxygenase aptC (417 aa).

The signal sequence occupies residues 1-18 (MTLPVLIIGAGLSGLTTA). 5 residues coordinate FAD: glutamate 32, alanine 43, arginine 117, aspartate 332, and glycine 345.

It belongs to the paxM FAD-dependent monooxygenase family. The cofactor is FAD.

It carries out the reaction 3,6,8,9-tetrahydroxy-1-oxo-3-(2-oxopropyl)-1,2,3,4-tetrahydroanthracene-2-carboxyl-[ACP] + NADPH + O2 + H(+) = 2,3,6,8,9-pentahydroxy-1-oxo-3-(2-oxopropyl)-1,2,3,4-tetrahydroanthracene-2-carboxyl-[ACP] + NADP(+) + H2O. Its pathway is secondary metabolite biosynthesis. In terms of biological role, FAD-dependent monooxygenase; part of the gene cluster that mediates the biosynthesis of asperthecin, an anthraquinone pigment. Polyketide synthase (PKS) aptA catalyzes the formation of the aromatic polyketide from acetyl coenzyme A and seven malonyl coenzyme A molecules. Polyketide is subsequently hydrolyzed by the action of the hydrolase aptB into endocrocin-9-anthrone. Endocrocin-9-anthrone is then oxidized into endocrocin by the monooxygenase aptC. Endocrocin is likely to decarboxylate spontaneously to form emodin which explains why there is no decarboxylase in the asperthecin biosynthesis cluster. Finally, aptC or another endogenous oxygenase catalyzes additional oxidation steps to form asperthecin. This chain is FAD-dependent monooxygenase aptC, found in Emericella nidulans (strain FGSC A4 / ATCC 38163 / CBS 112.46 / NRRL 194 / M139) (Aspergillus nidulans).